A 41-amino-acid polypeptide reads, in one-letter code: Competence-stimulating peptide type 2 (41 aa).

A propeptide spanning residues 1 to 24 (MKNTVKLEQFVALKEKDLQKIKGG) is cleaved from the precursor.

The protein belongs to the ComC family.

The protein localises to the secreted. Its function is as follows. Acts as a pheromone, induces cells to develop competence for genetic transformation. This is Competence-stimulating peptide type 2 (comC2) from Streptococcus pneumoniae serotype 4 (strain ATCC BAA-334 / TIGR4).